A 342-amino-acid polypeptide reads, in one-letter code: Nucleoid-associated protein Shewana3_2426 (342 aa).

It belongs to the YejK family.

The protein localises to the cytoplasm. It is found in the nucleoid. This Shewanella sp. (strain ANA-3) protein is Nucleoid-associated protein Shewana3_2426.